The primary structure comprises 86 residues: Triple QxxK/R motif-containing protein (86 aa).

A helical membrane pass occupies residues 51 to 71 (VGLVLAAILALLLAFYAFFYL).

The protein belongs to the TRIQK family.

Its subcellular location is the endoplasmic reticulum membrane. Functionally, may play a role in cell growth and maintenance of cell morphology. The polypeptide is Triple QxxK/R motif-containing protein (TRIQK) (Pongo abelii (Sumatran orangutan)).